The sequence spans 570 residues: Phosphoribosylaminoimidazole carboxylase (570 aa).

Residues 110-297 enclose the ATP-grasp domain; that stretch reads KQHLVKNRIP…QFEAHLRAIL (188 aa). 137–192 provides a ligand contact to ATP; that stretch reads GSSLGYPFVLKSRTLAYDGRGNFVVKSEEDIEKGLEFLANRPLYAEKWASFKKELS.

This sequence in the C-terminal section; belongs to the AIR carboxylase family. Class I subfamily.

The enzyme catalyses 5-amino-1-(5-phospho-D-ribosyl)imidazole-4-carboxylate + H(+) = 5-amino-1-(5-phospho-beta-D-ribosyl)imidazole + CO2. Its pathway is purine metabolism; IMP biosynthesis via de novo pathway; 5-amino-1-(5-phospho-D-ribosyl)imidazole-4-carboxylate from 5-amino-1-(5-phospho-D-ribosyl)imidazole (carboxylase route): step 1/1. The protein is Phosphoribosylaminoimidazole carboxylase (ADE2) of Candida glabrata (strain ATCC 2001 / BCRC 20586 / JCM 3761 / NBRC 0622 / NRRL Y-65 / CBS 138) (Yeast).